A 55-amino-acid chain; its full sequence is MKRNQKEWESVSKKGLMKPGGTSIVKAAGCMGCWASKSIAMTRVCALPHPAMRAI.

Residues M1–G29 constitute a propeptide that is removed on maturation. C30 and C45 are disulfide-bonded. Positions C30 to I55 form a cross-link, cyclopeptide (Cys-Ile). The 2-(S-cysteinyl)-methionine (Cys-Met) cross-link spans C33–M41.

Post-translationally, this is a cyclic peptide. The first step in SKF maturation is probably thioether bond formation.

The protein resides in the secreted. Functionally, produces a 26-residue extracellular sporulation killing factor (SKF) that induces the lysis of other B.subtilis cells that have not entered the sporulation pathway, providing a source of nutrients to support sporulation, and at the same time delaying commitment to the energetically expensive and irreversible onset of sporulation. Can also inhibit growth of other bacteria at high concentrations. Addition of SKF to solid cultures induces killing, but it is much less effective than SDP (AC O34344). Has a role in protecting the secreted lipase LipA against proteolysis, either by modulating its folding or by acting as a protease inhibitor. This Bacillus subtilis (strain 168) protein is Sporulation killing factor.